The chain runs to 212 residues: ER lumen protein-retaining receptor 1-B (212 aa).

Topologically, residues 1–4 (MNIF) are lumenal. Residues 5–24 (RFLGDISHLSAIIILLLKIW) form a helical membrane-spanning segment. Over 25 to 32 (KSRSCAGI) the chain is Cytoplasmic. A helical membrane pass occupies residues 33 to 52 (SGKSQLLFAIVFTTRYLDLF). The segment at 47 to 48 (RY) is interaction with the K-D-E-L motif on target proteins. Residues 53–58 (TNFISF) lie on the Lumenal side of the membrane. The chain crosses the membrane as a helical span at residues 59–79 (YNTSMKVVYVASSYATVWMIY). Topologically, residues 80–92 (SKFKATYDGNHDT) are cytoplasmic. Residues 93-110 (FRVEFLIVPTAILSFLVN) form a helical membrane-spanning segment. Residues 111 to 116 (HDFTPL) lie on the Lumenal side of the membrane. Residues 117–135 (EILWTFSIYLESVAILPQL) form a helical membrane-spanning segment. Residues 136–149 (FMVSKTGEAETITS) are Cytoplasmic-facing. A helical membrane pass occupies residues 150-168 (HYLFALGIYRTLYLFNWIW). Residues 159 to 169 (RTLYLFNWIWR) form an interaction with the K-D-E-L motif on target proteins region. Residues 169 to 178 (RYQFEEFFDL) are Lumenal-facing. The chain crosses the membrane as a helical span at residues 179-199 (IAIVAGLVQTVLYCDFFYLYI). Topologically, residues 200–212 (TKVLKGKKLSLPA) are cytoplasmic. The important for recycling of cargo proteins with the sequence motif K-D-E-L from the Golgi to the endoplasmic reticulum stretch occupies residues 204-207 (KGKK).

Belongs to the ERD2 family.

The protein localises to the golgi apparatus membrane. The protein resides in the cytoplasmic vesicle. It is found in the COPI-coated vesicle membrane. Its subcellular location is the endoplasmic reticulum membrane. It localises to the endoplasmic reticulum-Golgi intermediate compartment membrane. Functionally, receptor for the C-terminal sequence motif K-D-E-L that is present on endoplasmic reticulum resident proteins and that mediates their recycling from the Golgi back to the endoplasmic reticulum. The chain is ER lumen protein-retaining receptor 1-B (kdelr1-b) from Xenopus laevis (African clawed frog).